The sequence spans 269 residues: Rhamnulose-1-phosphate aldolase (269 aa).

Glu119 is a catalytic residue. Positions 142, 144, and 214 each coordinate Zn(2+).

It belongs to the aldolase class II family. RhaD subfamily. It depends on Zn(2+) as a cofactor.

The protein resides in the cytoplasm. The enzyme catalyses L-rhamnulose 1-phosphate = (S)-lactaldehyde + dihydroxyacetone phosphate. It functions in the pathway carbohydrate degradation; L-rhamnose degradation; glycerone phosphate from L-rhamnose: step 3/3. Its function is as follows. Catalyzes the reversible cleavage of L-rhamnulose-1-phosphate to dihydroxyacetone phosphate (DHAP) and L-lactaldehyde. In Bacteroides thetaiotaomicron (strain ATCC 29148 / DSM 2079 / JCM 5827 / CCUG 10774 / NCTC 10582 / VPI-5482 / E50), this protein is Rhamnulose-1-phosphate aldolase.